The following is a 362-amino-acid chain: MAHHDPIGLIAPNAGLAQLNERSREIFRQIVESYLATGEPVGSRNISRLITVPLSPASVRNVMSDLEQLGLIYAPHTSAGRLPTELGLRFFVDALMQVGDLTEPERQSIQAQLASVGRAQSVEAALGEALTRLSGLTRAAAVVLTAKSNARLKHIEFVRLEPERALVVLVSEDGQVENRVLTLAAGVPSSALIEASNFLNARIRGRTLAEARLELETALSQDRAELDQLTQKVISAGIASWSGGANDDRQLIVRGHANLLEDLHALDDLERVRLLFDDLETKRGVIDLLGRAESAEGVRIFIGSENKLFSLSGSSTIIAPYSDGAGHIVGVLGVIGPTRLNYARVIPMVDYAARVVSQMLGG.

It belongs to the HrcA family.

Its function is as follows. Negative regulator of class I heat shock genes (grpE-dnaK-dnaJ and groELS operons). Prevents heat-shock induction of these operons. The sequence is that of Heat-inducible transcription repressor HrcA from Rhodopseudomonas palustris (strain BisB18).